A 317-amino-acid polypeptide reads, in one-letter code: sn-1-specific diacylglycerol lipase ABHD11 (317 aa).

The transit peptide at 1-20 directs the protein to the mitochondrion; that stretch reads MSNFAMSALCRVFTRGAPCG. The AB hydrolase-1 domain maps to 69-304; it reads PLVFLHGLFG…ASHWIHADKP (236 aa). Residues S142, E238, and H297 each act as charge relay system in the active site.

This sequence belongs to the AB hydrolase superfamily. Phosphorylated.

Its subcellular location is the mitochondrion. The protein localises to the mitochondrion matrix. It carries out the reaction 1-octadecanoyl-2-(5Z,8Z,11Z,14Z-eicosatetraenoyl)-sn-glycerol + H2O = 2-(5Z,8Z,11Z,14Z-eicosatetraenoyl)-glycerol + octadecanoate + H(+). The enzyme catalyses a 1,2-diacyl-sn-glycerol + H2O = a 2-acylglycerol + a fatty acid + H(+). It catalyses the reaction a 1,3-diacyl-sn-glycerol + H2O = a 1-acyl-sn-glycerol + a fatty acid + H(+). The catalysed reaction is 1-octadecanoyl-2-(9Z-octadecenoyl)-sn-glycerol + H2O = 2-(9Z-octadecenoyl)-glycerol + octadecanoate + H(+). It carries out the reaction 1-octadecanoyl-2-(4Z,7Z,10Z,13Z,16Z,19Z-docosahexaenoyl)-sn-glycerol + H2O = 2-(4Z,7Z,10Z,13Z,16Z,19Z-docosahexaenoyl)-glycerol + octadecanoate + H(+). The enzyme catalyses 1,2-didecanoylglycerol + H2O = decanoylglycerol + decanoate + H(+). In terms of biological role, catalyzes the hydrolysis of diacylglycerol in vitro and may function as a key regulator in lipid metabolism, namely by regulating the intracellular levels of diacylglycerol. 1,2-diacyl-sn-glycerols are the preferred substrate over 1,3-diacyl-sn-glycerols. The enzyme hydrolyzes stearate in preference to palmitate from the sn-1 position of 1,2-diacyl-sn-glycerols. The polypeptide is sn-1-specific diacylglycerol lipase ABHD11 (Danio rerio (Zebrafish)).